Reading from the N-terminus, the 1202-residue chain is DNA-directed RNA polymerase subunit beta (1202 aa).

Positions 1151–1162 (LRDMDEEDDDVV) are enriched in acidic residues. The interval 1151–1202 (LRDMDEEDDDVVNVDALSKYAEKQNEKTNASAEEAKAPSTESAPVETKNNQN) is disordered. Positions 1189 to 1202 (STESAPVETKNNQN) are enriched in polar residues.

It belongs to the RNA polymerase beta chain family. As to quaternary structure, the RNAP catalytic core consists of 2 alpha, 1 beta, 1 beta' and 1 omega subunit. When a sigma factor is associated with the core the holoenzyme is formed, which can initiate transcription.

The enzyme catalyses RNA(n) + a ribonucleoside 5'-triphosphate = RNA(n+1) + diphosphate. DNA-dependent RNA polymerase catalyzes the transcription of DNA into RNA using the four ribonucleoside triphosphates as substrates. The chain is DNA-directed RNA polymerase subunit beta from Pediococcus pentosaceus (strain ATCC 25745 / CCUG 21536 / LMG 10740 / 183-1w).